Here is a 450-residue protein sequence, read N- to C-terminus: Magnesium transporter MgtE (450 aa).

The Cytoplasmic segment spans residues 1–283 (MEEKLAVSLQ…SEAGPVALWL (283 aa)). The Mg(2+) site is built by E59, D91, D95, and G136. CBS domains lie at 138–200 (MTPE…RVAE) and 202–258 (MNPK…EATE). Residues Y170, S185, R187, D188, and V207 each coordinate ATP. Mg(2+)-binding residues include E216, A223, D226, D247, D250, E255, E258, and D259. Residue E275 participates in Ca(2+) binding. E275, Q304, E307, and E311 together coordinate Mn(2+). A helical transmembrane segment spans residues 284–306 (ARVRWLVILILTGMVTSSILQGF). Residues 307-315 (ESVLEAVTA) are Periplasmic-facing. E311 contacts Ca(2+). A helical transmembrane segment spans residues 316 to 337 (LAFYVPVLLGTGGNTGNQSATL). Topologically, residues 338-351 (IIRALATRDLDLRD) are cytoplasmic. The chain crosses the membrane as a helical span at residues 352 to 381 (WRRVFLKEMGVGLLLGLTLSFLLVGKVYWD). At 382 to 385 (GHPL) the chain is on the periplasmic side. Residue H383 coordinates Mn(2+). A helical transmembrane segment spans residues 386–409 (LLPVVGVSLVLIVFFANLVGAMLP). Topologically, residues 410–420 (FLLRRLGVDPA) are cytoplasmic. Mg(2+) contacts are provided by D418, A428, and D432. Residues 421–443 (LVSNPLVATLSDVTGLLIYLSVA) traverse the membrane as a helical segment. Over 444–450 (RLLLEAV) the chain is Periplasmic.

Belongs to the SLC41A transporter family. Homodimer.

It is found in the cell inner membrane. It carries out the reaction Mg(2+)(in) = Mg(2+)(out). Its activity is regulated as follows. The channel activity is regulated via the N-terminal cytoplasmic region, which acts as a Mg(2+) sensor to regulate the gating of the ion-conducting pore in response to the intracellular magnesium concentration. Under high-intracellular magnesium conditions, binding of magnesium to the N-terminal cytoplasmic domain stabilizes the closed conformation of the channel. Under low-intracellular magnesium conditions, the channel is in equilibrium between the open and closed states. A cation-binding site within the membrane (M1) strictly recognizes the size and geometry of the Mg(2+) hydration shells, which may be important for the selective transport of Mg(2+) over other cations. Cation-binding sites on the periplasmic side (M2 and M3) regulate channel opening and prevent conduction of near-cognate cations. Binding of Mn(2+) to the periplasmic sites strongly inhibits the Mg(2+) transport activity. In addition, activity is regulated by ATP, which binds to MgtE and modulates its Mg(2+)-dependent channel gating. ATP binding enhances the intracellular domain affinity for Mg(2+) within physiological concentrations of this divalent cation, enabling MgtE to function as an in vivo Mg(2+) sensor. ATP dissociation from MgtE upregulates Mg(2+) influx at both high and low intracellular Mg(2+) concentrations. Highly selective magnesium channel that plays an important role in Mg(2+) homeostasis. Functions as a Mg(2+)-dependent gating channel. Exhibits low activity with cobalt, suggesting that it might also be involved in the uptake of Co(2+) as a micronutrient. Also exhibits low activity with Ca(2+), but it shows almost no activity with Mn(2+). This Thermus thermophilus (strain ATCC 27634 / DSM 579 / HB8) protein is Magnesium transporter MgtE.